Reading from the N-terminus, the 548-residue chain is Alpha-1,3-mannosyl-glycoprotein 4-beta-N-acetylglucosaminyltransferase B (548 aa).

Topologically, residues 1 to 7 (MRLRNGT) are cytoplasmic. The chain crosses the membrane as a helical; Signal-anchor for type II membrane protein span at residues 8–28 (FLTLLLFCLCAFLSLSWYAAL). Residues 29-548 (SGQKGDVVDV…LSEIFLKKAD (520 aa)) lie on the Lumenal side of the membrane. A coiled-coil region spans residues 36 to 83 (VDVYQREFLALRDRLHAAEQESLKRSKELNLVLDEIKRAVSERQALRD). 2 N-linked (GlcNAc...) asparagine glycosylation sites follow: Asn-87 and Asn-103.

Belongs to the glycosyltransferase 54 family. Interacts with SLC35A3. Requires a divalent metal cation as cofactor. Post-translationally, N-glycosylated. As to expression, widely expressed. Strongly overexpressed in pancreatic cancer.

It localises to the golgi apparatus membrane. It catalyses the reaction an N(4)-{beta-D-GlcNAc-(1-&gt;2)-alpha-D-Man-(1-&gt;3)-[alpha-D-Man-(1-&gt;6)]-beta-D-Man-(1-&gt;4)-beta-D-GlcNAc-(1-&gt;4)-beta-D-GlcNAc}-L-asparaginyl-[protein] + UDP-N-acetyl-alpha-D-glucosamine = an N(4)-{beta-D-GlcNAc-(1-&gt;2)-[beta-D-GlcNAc-(1-&gt;4)]-alpha-D-Man-(1-&gt;3)-[alpha-D-Man-(1-&gt;6)]-beta-D-Man-(1-&gt;4)-beta-D-GlcNAc-(1-&gt;4)-beta-D-GlcNAc}-L-asparaginyl-[protein] + UDP + H(+). The catalysed reaction is N(4)-{beta-D-GlcNAc-(1-&gt;2)-alpha-D-Man-(1-&gt;3)-[beta-D-GlcNAc-(1-&gt;2)-alpha-D-Man-(1-&gt;6)]-beta-D-Man-(1-&gt;4)-beta-D-GlcNAc-(1-&gt;4)-beta-D-GlcNAc}-L-asparaginyl-[protein] + UDP-N-acetyl-alpha-D-glucosamine = N(4)-{beta-D-GlcNAc-(1-&gt;2)-[beta-D-GlcNAc-(1-&gt;4)]-alpha-D-Man-(1-&gt;3)-[beta-D-GlcNAc-(1-&gt;2)-alpha-D-Man-(1-&gt;6)]-beta-D-Man-(1-&gt;4)-beta-D-GlcNAc-(1-&gt;4)-beta-D-GlcNAc}-L-asparaginyl-[protein] + UDP + H(+). It carries out the reaction an N(4)-{beta-D-GlcNAc-(1-&gt;2)-alpha-D-Man-(1-&gt;3)-[beta-D-GlcNAc-(1-&gt;2)-[beta-D-GlcNAc-(1-&gt;6)]-alpha-D-Man-(1-&gt;6)]-beta-D-Man-(1-&gt;4)-beta-D-GlcNAc-(1-&gt;4)-beta-D-GlcNAc}-L-asparaginyl-[protein] + UDP-N-acetyl-alpha-D-glucosamine = an N(4)-{beta-D-GlcNAc-(1-&gt;2)-[beta-D-GlcNAc-(1-&gt;4)]-alpha-D-Man-(1-&gt;3)-[beta-D-GlcNAc-(1-&gt;2)-[beta-D-GlcNAc-(1-&gt;6)]-alpha-D-Man-(1-&gt;6)]-beta-D-Man-(1-&gt;4)-beta-D-GlcNAc-(1-&gt;4)-beta-D-GlcNAc}-L-asparaginyl-[protein] + UDP + H(+). The enzyme catalyses an N(4)-{beta-D-GlcNAc-(1-&gt;2)-alpha-D-Man-(1-&gt;3)-[beta-D-GlcNAc-(1-&gt;2)-alpha-D-Man-(1-&gt;6)]-beta-D-Man-(1-&gt;4)-beta-D-GlcNAc-(1-&gt;4)-[alpha-L-Fuc-(1-&gt;6)]-beta-D-GlcNAc}-L-asparaginyl-[protein] + UDP-N-acetyl-alpha-D-glucosamine = N(4)-{beta-D-GlcNAc-(1-&gt;2)-[beta-D-GlcNAc-(1-&gt;4)]-alpha-D-Man-(1-&gt;3)-[beta-D-GlcNAc-(1-&gt;2)-alpha-D-Man-(1-&gt;6)]-beta-D-Man-(1-&gt;4)-beta-D-GlcNAc-(1-&gt;4)-[alpha-L-Fuc-(1-&gt;6)]-beta-D-GlcNAc}-asparaginyl-[protein] + UDP + H(+). It catalyses the reaction an N(4)-{beta-D-GlcNAc-(1-&gt;2)-alpha-D-Man-(1-&gt;3)-[beta-D-Gal-(1-&gt;4)-beta-D-GlcNAc-(1-&gt;2)-alpha-D-Man-(1-&gt;6)]-beta-D-Man-(1-&gt;4)-beta-D-GlcNAc-(1-&gt;4)-beta-D-GlcNAc}-L-asparaginyl-[protein] + UDP-N-acetyl-alpha-D-glucosamine = an N(4)-{beta-D-GlcNAc-(1-&gt;2)-[beta-D-GlcNAc-(1-&gt;4)]-alpha-D-Man-(1-&gt;3)-[beta-D-Gal-(1-&gt;4)-beta-D-GlcNAc-(1-&gt;2)-alpha-D-Man-(1-&gt;6)]-beta-D-Man-(1-&gt;4)-beta-D-GlcNAc-(1-&gt;4)-beta-D-GlcNAc}-L-asparaginyl-[protein] + UDP + H(+). The catalysed reaction is N(4)-{beta-D-GlcNAc-(1-&gt;2)-alpha-D-Man-(1-&gt;3)-[alpha-D-Man-(1-&gt;3)-{alpha-D-Man-(1-&gt;6)}-alpha-D-Man-(1-&gt;6)]-beta-D-Man-(1-&gt;4)-beta-D-GlcNAc-(1-&gt;4)-beta-D-GlcNAc}-asparaginyl-[protein] + UDP-N-acetyl-alpha-D-glucosamine = N(4)-{beta-D-GlcNAc-(1-&gt;2)-[beta-D-GlcNAc-(1-&gt;4)]-alpha-D-Man-(1-&gt;3)-[alpha-D-Man-(1-&gt;3)-{alpha-D-Man-(1-&gt;6)}-alpha-D-Man-(1-&gt;6)]-beta-D-Man-(1-&gt;4)-beta-D-GlcNAc-(1-&gt;4)-beta-D-GlcNAc}-asparaginyl-[protein] + UDP + H(+). It carries out the reaction N(4)-{beta-D-GlcNAc-(1-&gt;2)-alpha-D-Man-(1-&gt;3)-beta-D-Man-(1-&gt;4)-beta-D-GlcNAc-(1-&gt;4)-beta-D-GlcNAc}-asparaginyl-[protein] + UDP-N-acetyl-alpha-D-glucosamine = N(4)-{beta-D-GlcNAc-(1-&gt;2)-[beta-D-GlcNAc-(1-&gt;4)]-alpha-D-Man-(1-&gt;3)-beta-D-Man-(1-&gt;4)-beta-D-GlcNAc-(1-&gt;4)-beta-D-GlcNAc}-asparaginyl-[protein] + UDP + H(+). It functions in the pathway protein modification; protein glycosylation. Functionally, glycosyltransferase that catalyzes the transfer of GlcNAc from UDP-GlcNAc to the GlcNAcbeta1-2Manalpha1-3 arm of the core structure of N-linked glycans through a beta1-4 linkage and participates in the production of tri- and tetra-antennary N-linked sugar chains. Prefers complex-type N-glycans over hybrid-types. Has lower affinities for donors or acceptors than MGAT4A, suggesting that, under physiological conditions, it is not the main contributor in N-glycan biosynthesis. This chain is Alpha-1,3-mannosyl-glycoprotein 4-beta-N-acetylglucosaminyltransferase B, found in Homo sapiens (Human).